A 520-amino-acid polypeptide reads, in one-letter code: Pleckstrin homology domain-containing family O member 1-A (520 aa).

4 disordered regions span residues 1–23 (MKKSHLVKRGLQDANQPSSQPDK), 208–296 (SLDK…GHLQ), 313–439 (IQEQ…KSTD), and 497–520 (QARQRREELSKTGMASQKLQQKSP). The PH domain occupies 20–131 (QPDKVGWIRR…WINVLNTAIT (112 aa)). The segment covering 227 to 241 (PASNTEAQEKTSSLP) has biased composition (polar residues). 2 stretches are compositionally biased toward basic and acidic residues: residues 242–255 (RKSEISWSQEDHPR) and 333–347 (DSPRLRHLKGSDSPH). The segment covering 348–361 (SKGSSSPHSANSPS) has biased composition (low complexity). Composition is skewed to basic and acidic residues over residues 363–385 (RAKDSPSSKSKESPHAKSKDSPR) and 396–418 (KSIDSPDSKESSSLHMKCIDLTH). A compositionally biased stretch (polar residues) spans 420–439 (KGSQSPLSTGSNSPHMKSTD). Positions 497-506 (QARQRREELS) are enriched in basic and acidic residues. Polar residues predominate over residues 509-520 (GMASQKLQQKSP).

In terms of processing, C-terminal fragments could be released during apoptosis via caspase-3-dependent cleavage.

It localises to the membrane. The protein localises to the nucleus. The protein resides in the cytoplasm. Its function is as follows. Plays a role in the regulation of the actin cytoskeleton through its interactions with actin capping protein (CP). The sequence is that of Pleckstrin homology domain-containing family O member 1-A (plekho1a) from Danio rerio (Zebrafish).